A 525-amino-acid chain; its full sequence is Glutamate--cysteine ligase (525 aa).

This sequence belongs to the glutamate--cysteine ligase type 1 family. Type 1 subfamily.

The catalysed reaction is L-cysteine + L-glutamate + ATP = gamma-L-glutamyl-L-cysteine + ADP + phosphate + H(+). Its pathway is sulfur metabolism; glutathione biosynthesis; glutathione from L-cysteine and L-glutamate: step 1/2. The sequence is that of Glutamate--cysteine ligase from Pseudomonas putida (strain ATCC 47054 / DSM 6125 / CFBP 8728 / NCIMB 11950 / KT2440).